The chain runs to 231 residues: PX domain-containing protein 1 (231 aa).

Residues 1–134 (MASAVFEGTS…TFFERSPLDQ (134 aa)) enclose the PX domain.

This Bos taurus (Bovine) protein is PX domain-containing protein 1 (PXDC1).